The chain runs to 606 residues: Leucine-rich repeat and immunoglobulin-like domain-containing nogo receptor-interacting protein 2 (606 aa).

The signal sequence occupies residues 1-27; it reads MLHTAISCWQPFLGLAVVLIFMGSTIG. Positions 28 to 57 constitute an LRRNT domain; the sequence is CPARCECSAQNKSVSCHRRRLIAIPEGIPI. Over 28 to 545 the chain is Extracellular; that stretch reads CPARCECSAQ…LDLKTILVST (518 aa). A glycan (N-linked (GlcNAc...) asparagine) is linked at Asn-38. LRR repeat units follow at residues 58 to 79, 82 to 103, 106 to 127, 130 to 151, 154 to 175, 178 to 199, 202 to 223, 226 to 247, 250 to 271, 274 to 295, 298 to 319, and 322 to 343; these read ETKI…EFIS, LLEE…AFNN, NLRS…VFTG, NLTK…MFQD, NLKS…AFSG, SLEQ…ALSH, SLIS…AFKR, HLKH…NSLY, NLTS…AFKH, YLTH…MFSD, RLQE…SFQG, and FLRV…VFSS. Asn-130 carries an N-linked (GlcNAc...) asparagine glycan. Asn-188 carries N-linked (GlcNAc...) asparagine glycosylation. The N-linked (GlcNAc...) asparagine glycan is linked to Asn-279. Asn-327 carries N-linked (GlcNAc...) asparagine glycosylation. The 55-residue stretch at 355 to 409 folds into the LRRCT domain; sequence NPLACDCRLLWILQRQPTLQFGGQQPMCAGPDTIRERSFKDFHSTALSFYFTCKK. Residues 410 to 499 enclose the Ig-like C2-type domain; sequence PKIREKKLQH…GNDTFTASLT (90 aa). Cys-432 and Cys-483 are disulfide-bonded. The chain crosses the membrane as a helical span at residues 546 to 566; that stretch reads AMGCFTFLGVVLFCFLLLFVW. Topologically, residues 567–606 are cytoplasmic; it reads SRGKGKHKNSIDLEYVPRKNNGAVVEGEVAGPRRFNMKMI.

The protein resides in the membrane. This Homo sapiens (Human) protein is Leucine-rich repeat and immunoglobulin-like domain-containing nogo receptor-interacting protein 2 (LINGO2).